Consider the following 438-residue polypeptide: Xylose isomerase (438 aa).

Active-site residues include His103 and Asp106. Positions 234, 270, 273, 298, 309, 311, and 341 each coordinate Mg(2+).

It belongs to the xylose isomerase family. Homotetramer. It depends on Mg(2+) as a cofactor.

The protein localises to the cytoplasm. It carries out the reaction alpha-D-xylose = alpha-D-xylulofuranose. This is Xylose isomerase from Bacteroides thetaiotaomicron (strain ATCC 29148 / DSM 2079 / JCM 5827 / CCUG 10774 / NCTC 10582 / VPI-5482 / E50).